Here is a 744-residue protein sequence, read N- to C-terminus: MSSGGRFNFDDGGSYCGGWEDGKAHGHGVCTGPKGQGEYTGSWSHGFEVLGVYTWPSGNTYQGTWAQGKRHGIGLESKGKWVYKGEWTHGFKGRYGVRECTGNGAKYEGTWSNGLQDGYGTETYSDGGTYQGQWVGGMRQGYGVRQSVPYGMAAVIRSPLRTSINSLRSEHTNGAALHPDASPAVAGSPAVSRGGFVLVAHSDSEILKSKKKGLFRRSLLSGLKLRKSESKSSLASQRSKQSSFRSEAGMSTVSSTASDIHSTISLGEAEAELAVIEDDIDATTTETYVGEWKNDKRSGFGVSQRSDGLKYEGEWVSNRRHGYGCMTFPDGTKEEGKYKQNVLVSGKRKNLIPLRASKIREKVDRAVEAAERAATIAKQKAEIAASRTSHSRAKAEAALTAAQKAQEEARIARITAKEFSPSFQHRENGLEYQRPKHQMSCDDIEVLSTGTPLQQESPELYRKGTTPSDLTPDDSPLQSFPASPTSTPPPAPASRTKMAHFSRQVSVDEERSGDIQMLLEGRGGDYARNSWGEEKAGASRGIRSGALRSGQPTEDFRTRGSGHKQPGNPKPRERRTESPTTFSWTSHHRAGNPCSGGPKLLEPDEEQLSNYKLEMKPLLRMDACPQDTHPQRRRHSRGAGGDRGFGLQRLRSKSQNKENLRPASSAEPTVQKLESLRLGDRPEPRLLRWDLTFSPPQKSLPVALESDEETGDELKSSTGSAPILVVMVILLNIGVAILFINFFI.

Residues M1–I723 lie on the Cytoplasmic side of the membrane. 6 MORN repeats span residues Y15 to G37, Y39 to T60, Y61 to V82, Y83 to A105, Y107 to T129, and Y130 to M152. A disordered region spans residues S230–T252. Low complexity predominate over residues K231 to F244. 2 MORN repeats span residues Y288–K310 and Y311–K333. A Phosphoserine modification is found at S440. T451 carries the phosphothreonine modification. 2 disordered regions span residues T451–P603 and C624–R677. S457 is modified (phosphoserine). T471 bears the Phosphothreonine mark. Phosphoserine occurs at positions 475 and 506. 2 positions are modified to phosphoserine: S699 and S706. Residues L724–I744 traverse the membrane as a helical; Anchor for type IV membrane protein segment.

It belongs to the junctophilin family. As to expression, specifically expressed in brain. Highest levels in the olfactory tubercle, caudate putamen, nucleus accumbens, hippocampal formation, piriform cortex and cerebellar cortex. Expressed in disctete neurons sites. In hippocampal formation, expressed in dendrites of hippocampal pyramidal and denate granule cells. In cerebellum, it is highly expressed in Purkinge cells, while it is weakly expressed in granular cells.

Its subcellular location is the cell membrane. The protein resides in the endoplasmic reticulum membrane. Its function is as follows. Junctophilins contribute to the formation of junctional membrane complexes (JMCs) which link the plasma membrane with the endoplasmic or sarcoplasmic reticulum in excitable cells. Provides a structural foundation for functional cross-talk between the cell surface and intracellular calcium release channels. JPH3 is brain-specific and appears to have an active role in certain neurons involved in motor coordination and memory. This is Junctophilin-3 (Jph3) from Mus musculus (Mouse).